The chain runs to 342 residues: Oxygen-dependent coproporphyrinogen-III oxidase (342 aa).

S98 lines the substrate pocket. A divalent metal cation-binding residues include H102 and H112. H112 serves as the catalytic Proton donor. Residue 114-116 (NYR) coordinates substrate. Residues H146 and H176 each contribute to the a divalent metal cation site. Residues 266-301 (YVEFNLVWDRGTIFGLQTNGRTESILMSLPPLARWE) form an important for dimerization region.

Belongs to the aerobic coproporphyrinogen-III oxidase family. Homodimer. A divalent metal cation is required as a cofactor.

It localises to the cytoplasm. It catalyses the reaction coproporphyrinogen III + O2 + 2 H(+) = protoporphyrinogen IX + 2 CO2 + 2 H2O. The protein operates within porphyrin-containing compound metabolism; protoporphyrin-IX biosynthesis; protoporphyrinogen-IX from coproporphyrinogen-III (O2 route): step 1/1. In terms of biological role, involved in the heme and chlorophyll biosynthesis. Catalyzes the aerobic oxidative decarboxylation of propionate groups of rings A and B of coproporphyrinogen-III to yield the vinyl groups in protoporphyrinogen-IX. This Prochlorococcus marinus (strain MIT 9312) protein is Oxygen-dependent coproporphyrinogen-III oxidase.